The following is a 448-amino-acid chain: MLPKEDPELKKCKHKCRDERQFDEQQRRDGKQICEEKARERQQEEGNSSEESYGKEQEENPYVFQDEHFESRVKTEEGRVQVLENFTKRSRLLSGIENFRLAILEANPHTFISPAHFDAELVLFVAKGRATITMVREEKRESFNVEHGDIIRIPAGTPVYMINRDENEKLFIVKILQPVSAPGHFEAFYGAGGEDPESFYRAFSWEVLEAALKVRREQLEKVFGEQSKGSIVKASREKIRALSQHEEGPPRIWPFGGESSGPINLLHKHPSQSNQFGRLYEAHPDDHKQLQDLDLMVSFANITKGSMAGPYYNSRATKISVVVEGEGFFEMACPHLSSSSGSYQKISARLRRGVVFVAPAGHPVAVIASQNNNLQVLCFEVNAHGNSRFPLAGKGNIVNEFERDAKELAFNLPSREVERIFKNQDQAFFFPGPNKQQEEGGRGGRAFE.

Residues 1–44 (MLPKEDPELKKCKHKCRDERQFDEQQRRDGKQICEEKARERQQE) are compositionally biased toward basic and acidic residues. Positions 1 to 66 (MLPKEDPELK…QEENPYVFQD (66 aa)) are disordered. N47 is a glycosylation site (N-linked (GlcNAc...) asparagine). 2 Cupin type-1 domains span residues 84 to 220 (ENFT…EQLE) and 263 to 418 (INLL…REVE). An N-linked (GlcNAc...) asparagine glycan is attached at N301. C333, H335, and H362 together coordinate Cu cation.

The protein belongs to the 7S seed storage protein family. Homotrimer. Homohexamer. Post-translationally, N-glycosylated at Asn-301 mostly with xylosylated paucimannosidic-type N-glycan MMX (an N-linked glycan with beta-1,2-xylose residue in the structure) and also with MMXF (a complex N-linked glycan with alpha-1,3-fucose and beta-1,2-xylose residues in the structure). In terms of processing, a mixture of proteolytically processed and unprocessed subunits exist. In terms of tissue distribution, expressed in seed (at protein level). Expressed in seed.

Its function is as follows. Seed storage protein. Does not have superoxide dismutase (SOD) activity. In Corylus avellana (European hazel), this protein is Vicilin Cor a 11.0101.